A 2108-amino-acid chain; its full sequence is Kinesin-like protein KIF26B (2108 aa).

Disordered stretches follow at residues 1–124 (MNSV…PGSD) and 263–287 (KHGS…PTHQ). Residues 40 to 50 (WYRKAYEESRA) are compositionally biased toward basic and acidic residues. A compositionally biased stretch (low complexity) spans 58–98 (GAGSALGSSGTPSPGSGTSSPSSFTGSPGPASPGIGTSSPG). The span at 99–120 (SLGGSPGFGTGSPGSGSGGGSS) shows a compositional bias: gly residues. The Kinesin motor domain maps to 450–801 (KVKVMLRICS…IQIASRVLRM (352 aa)). 546–553 (GHAKLGKS) contacts ATP. Disordered regions lie at residues 805–825 (KTKY…GRMR), 876–917 (SDKE…GKSE), 937–1166 (DGSE…ESKK), 1406–1504 (EPEA…PVTD), 1519–1653 (GLAT…SSSK), 1685–1799 (AESL…ASKL), and 1824–1974 (RAGP…WVDG). Low complexity predominate over residues 1004–1046 (SHSPVPAAAPAHSPSPASPRSVPGSSSQHSASPLVQSPSLQSS). Residues 1424-1461 (RESKENSAKKEMKFEDPWLKREEEVKKETAHPNEEGMM) are compositionally biased toward basic and acidic residues. Over residues 1491 to 1500 (SSSSGEVSAS) the composition is skewed to low complexity. 2 stretches are compositionally biased toward polar residues: residues 1521-1537 (ATQS…SSSL) and 1611-1628 (RASP…SPLN). Low complexity-rich tracts occupy residues 1713–1730 (SAGT…AGQS) and 1751–1763 (STTK…TKSL). Positions 1781-1795 (PWSTQSLSRNRSSGL) are enriched in polar residues. Residues 1824–1836 (RAGPEAEARGGAL) show a composition bias toward low complexity. T1855 carries the post-translational modification Phosphothreonine. Polar residues-rich tracts occupy residues 1866 to 1875 (GHGSDNSSVL) and 1907 to 1925 (ATGS…SSSV). Residues 1930 to 1948 (RSLKTPKKRSNPGSQRRRL) are compositionally biased toward basic residues. The span at 1954–1968 (LDTSSPVRKPPNSTG) shows a compositional bias: polar residues. A Phosphoserine modification is found at S1958.

The protein belongs to the TRAFAC class myosin-kinesin ATPase superfamily. Kinesin family. KIF26 subfamily. In terms of assembly, interacts with MYH10. In terms of processing, phosphorylation at Thr-1855 and Ser-1958 by CDKs, mainly CDK2 and CDK5, enhances the interaction with NEDD4, polyubiquitination, and subsequent proteasomal degradation. Phosphorylation occurs upon loss of interaction with microtubules. Polyubiquitinated by NEDD4, resulting in proteasomal degradation.

The protein localises to the cytoplasm. It is found in the cytoskeleton. Essential for embryonic kidney development. Plays an important role in the compact adhesion between mesenchymal cells adjacent to the ureteric buds, possibly by interacting with MYH10. This could lead to the establishment of the basolateral integrity of the mesenchyme and the polarized expression of ITGA8, which maintains the GDNF expression required for further ureteric bud attraction. Although it seems to lack ATPase activity it is constitutively associated with microtubules. The chain is Kinesin-like protein KIF26B (KIF26B) from Homo sapiens (Human).